Reading from the N-terminus, the 371-residue chain is Cytokine receptor-like factor 2 (371 aa).

An N-terminal signal peptide occupies residues 1-22 (MGRLVLLWGAAVFLLGGWMALG). Residues 23–231 (QGGAAEGVQI…PTPPKPKLSK (209 aa)) are Extracellular-facing. Asn47 and Asn55 each carry an N-linked (GlcNAc...) asparagine glycan. A disulfide bridge links Cys71 with Cys84. Asn101 and Asn169 each carry an N-linked (GlcNAc...) asparagine glycan. Positions 118–211 (KPSSPKHVRF…DWSEVTCWQR (94 aa)) constitute a Fibronectin type-III domain. A disulfide bond links Cys180 and Cys218. The WSXWS motif motif lies at 200 to 204 (PSDWS). Residues 232 to 252 (FILISSLAILLMVSLLLLSLW) traverse the membrane as a helical segment. The Cytoplasmic portion of the chain corresponds to 253–371 (KLWRVKKFLI…VMNDRSYVAL (119 aa)). The short motif at 261-269 (LIPSVPDPK) is the Box 1 motif element. The span at 322–336 (ESPRMLDPQTEEKEA) shows a compositional bias: basic and acidic residues. Residues 322–347 (ESPRMLDPQTEEKEASGGSLQLPHQP) are disordered.

The protein belongs to the type I cytokine receptor family. Type 5 subfamily. Heterodimer of CRLF2 and IL7R. As to expression, expressed in heart, skeletal muscle, kidney and adult and fetal liver. Primarily expressed in dendrites and monocytes. Weakly expressed in T-cells.

It localises to the cell membrane. The protein localises to the secreted. Functionally, receptor for thymic stromal lymphopoietin (TSLP). Forms a functional complex with TSLP and IL7R which is capable of stimulating cell proliferation through activation of STAT3 and STAT5. Also activates JAK2. Implicated in the development of the hematopoietic system. The protein is Cytokine receptor-like factor 2 (CRLF2) of Homo sapiens (Human).